A 257-amino-acid chain; its full sequence is Type 2 phosphatidylinositol 4,5-bisphosphate 4-phosphatase (257 aa).

A compositionally biased stretch (basic and acidic residues) spans 1–10; the sequence is MAADGVDERS. A disordered region spans residues 1–34; that stretch reads MAADGVDERSPLLSASHSGSVTPTAPPYLQDSSP. Residues 13 to 23 show a composition bias toward polar residues; it reads LSASHSGSVTP. Thr22 carries the phosphothreonine modification. Residue Ser33 is modified to Phosphoserine. The active site involves Cys107. A CX5R motif motif is present at residues 107–113; it reads CKDTSRR. Helical transmembrane passes span 192 to 212 and 227 to 247; these read CCAYITIGMMCIFIGIGLTVG and WAIAYLLGLVCLIRACYWGAI.

It localises to the late endosome membrane. Its subcellular location is the lysosome membrane. The protein resides in the cytoplasmic vesicle. The protein localises to the phagosome membrane. It is found in the cell membrane. It catalyses the reaction a 1,2-diacyl-sn-glycero-3-phospho-(1D-myo-inositol-4,5-bisphosphate) + H2O = a 1,2-diacyl-sn-glycero-3-phospho-(1D-myo-inositol-5-phosphate) + phosphate. In terms of biological role, catalyzes the hydrolysis of phosphatidylinositol-4,5-bisphosphate (PtdIns-4,5-P2) to phosphatidylinositol-4-phosphate (PtdIns-4-P). Does not hydrolyze phosphatidylinositol 3,4,5-trisphosphate, phosphatidylinositol 3,4-bisphosphate, inositol 3,5-bisphosphate, inositol 3,4-bisphosphate, phosphatidylinositol 5-monophosphate, phosphatidylinositol 4-monophosphate and phosphatidylinositol 3-monophosphate. Negatively regulates the phagocytosis of large particles by reducing phagosomal phosphatidylinositol 4,5-bisphosphate accumulation during cup formation. The protein is Type 2 phosphatidylinositol 4,5-bisphosphate 4-phosphatase of Bos taurus (Bovine).